The chain runs to 66 residues: Large ribosomal subunit protein bL35 (66 aa).

It belongs to the bacterial ribosomal protein bL35 family.

This is Large ribosomal subunit protein bL35 from Borreliella afzelii (strain PKo) (Borrelia afzelii).